A 126-amino-acid chain; its full sequence is Mating-type protein A1 (126 aa).

A DNA-binding region (homeobox) is located at residues 70–126; that stretch reads SPKGKSSISPQARAFLEQVFRRKQSLNSKEKEEVAKKCGITPLQVRVWFINKRMRSK.

The protein belongs to the MATA1 family. Binds DNA with a high specificity as a heterodimer of A1 and ALPHA2.

The protein localises to the nucleus. In terms of biological role, mating type proteins are sequence specific DNA-binding proteins that act as master switches in yeast differentiation by controlling gene expression in a cell type-specific fashion. Transcriptional corepressor that, in a/alpha diploid cells, binds cooperatively with the ALPHA2 protein to a 21-bp DNA sequence termed the haploid-specific gene (hsg) operator, to repress transcription of haploid-specific genes and of MATALPHA1. The protein is Mating-type protein A1 (MATA1) of Saccharomyces cerevisiae (Baker's yeast).